The primary structure comprises 486 residues: Achaete-scute complex protein T8 (486 aa).

Disordered stretches follow at residues 1–26 and 75–158; these read MAAL…GIKT and AAST…LPLP. A compositionally biased stretch (polar residues) spans 75–86; it reads AASTTNTTPISS. One can recognise a bHLH domain in the interval 159 to 223; that stretch reads QAVARRNARE…RMAVEYIRSL (65 aa).

In terms of assembly, efficient DNA binding requires dimerization with another bHLH protein. L(1)SC, SC and AC strongly label the presumptive stomatogastric nervous system, while ASE is more prominent in the presumptive procephalic lobe.

Functionally, involved in the determination of the neuronal precursors of optic lobes in the central nervous system. The protein is Achaete-scute complex protein T8 (ase) of Drosophila melanogaster (Fruit fly).